Here is a 353-residue protein sequence, read N- to C-terminus: O-antigen biosynthesis glycosyltransferase WclY (353 aa).

A helical transmembrane segment spans residues 116-136 (SLIGGLLWCSIWLFFDKLVIL). Positions 190 and 271 each coordinate UDP. The E(x7)E signature appears at 263–271 (EGFGLTVLE).

It belongs to the glycosyltransferase group 1 family. Glycosyltransferase 4 subfamily.

The protein resides in the membrane. It participates in bacterial outer membrane biogenesis; LPS O-antigen biosynthesis. With respect to regulation, activated by 5mM MnCl(2) and MgCl(2). No significant effect on activity by 5 mM ethylenediaminetetraacetic acid (EDTA), 0.125-0.5% Triton X-100 or dithiothreitol (DTT). Inhibited by 5 mM Zn-acetate. Functionally, involved in the assembly of the O-repeating unit during O-antigen biosynthesis. Glucosyltransferase accountable for the alpha-D-Glc-1,4-beta-D-Gal linkage within the O-antigen. Transfers alpha-1,4-Glc to the Gal moiety of a specific Gal-beta1-3GalNAc-alpha-OPO3-PO3-phenoxyundecyl (Gal-beta1-3GalNAc-PP-PhU) synthetic natural acceptor substrate analog. Requires both Gal-beta1-3GalNAc-alpha and the diphosphate moiety in the acceptor. Not active with GalNAc-PP-PhU, GlcNAc-PP-PhU, Gal-beta1-3GalNAc-alpha-O-benzyl, D-Rha-alpha1-3GlcNAc-alpha-PP-PhU or D-Man-alpha1-3Man-alpha-5-benzamidopentyl (BAP), nor with glycopeptides TTTVTP (Gal-beta1-3GalNAc-alpha-)TPTG or TT (Gal-beta1-3GalNAc-alpha-)TVTPTPTG as acceptor substrates. Has a broad nucleotide sugar donor substrate specificity with ADP-Glc, TDP-Glc and UDP-Glc as superior donors. Gal, GlcNAc, and GalNAc residues are transferred from UDP-sugars, but with low activity. UDP-Xyl, UDP-GlcA, GDP-Fuc or GDP-K-Rha do not act as donors. This Escherichia coli protein is O-antigen biosynthesis glycosyltransferase WclY.